Here is a 221-residue protein sequence, read N- to C-terminus: Translation initiation factor 6 (221 aa).

The protein belongs to the eIF-6 family.

Binds to the 50S ribosomal subunit and prevents its association with the 30S ribosomal subunit to form the 70S initiation complex. This Halorubrum lacusprofundi (strain ATCC 49239 / DSM 5036 / JCM 8891 / ACAM 34) protein is Translation initiation factor 6.